Reading from the N-terminus, the 147-residue chain is Hemoglobin subunit beta (147 aa).

Residues 2-147 (ELTEAQRGAI…VVSALGKQYH (146 aa)) enclose the Globin domain. Residues His-63 and His-92 each coordinate heme b.

It belongs to the globin family. As to quaternary structure, heterotetramer of two alpha chains and two beta chains. In terms of tissue distribution, red blood cells.

In terms of biological role, involved in oxygen transport from gills to the various peripheral tissues. The chain is Hemoglobin subunit beta (hbb) from Electrophorus electricus (Electric eel).